Here is a 429-residue protein sequence, read N- to C-terminus: Adenylosuccinate synthetase (429 aa).

GTP contacts are provided by residues Gly-12 to Lys-18 and Gly-40 to Thr-42. Asp-13 (proton acceptor) is an active-site residue. 2 residues coordinate Mg(2+): Asp-13 and Gly-40. Residues Asp-13–Lys-16, Asn-38–His-41, Thr-129, Arg-143, Gln-223, Thr-238, and Arg-302 each bind IMP. Residue His-41 is the Proton donor of the active site. A substrate-binding site is contributed by Thr-298–Arg-304. GTP contacts are provided by residues Arg-304, Lys-330 to Asp-332, and Ser-412 to Ser-414.

This sequence belongs to the adenylosuccinate synthetase family. As to quaternary structure, homodimer. Requires Mg(2+) as cofactor.

Its subcellular location is the cytoplasm. It catalyses the reaction IMP + L-aspartate + GTP = N(6)-(1,2-dicarboxyethyl)-AMP + GDP + phosphate + 2 H(+). It functions in the pathway purine metabolism; AMP biosynthesis via de novo pathway; AMP from IMP: step 1/2. In terms of biological role, plays an important role in the de novo pathway of purine nucleotide biosynthesis. Catalyzes the first committed step in the biosynthesis of AMP from IMP. The chain is Adenylosuccinate synthetase from Acidiphilium cryptum (strain JF-5).